Reading from the N-terminus, the 461-residue chain is Cysteine--tRNA ligase (461 aa).

Cys28 contributes to the Zn(2+) binding site. The 'HIGH' region motif lies at 30-40 (VTIYDLCHIGH). The Zn(2+) site is built by Cys211, His236, and Glu240. The short motif at 268–272 (KMSKS) is the 'KMSKS' region element. Residue Lys271 participates in ATP binding.

This sequence belongs to the class-I aminoacyl-tRNA synthetase family. Monomer. Requires Zn(2+) as cofactor.

The protein resides in the cytoplasm. The enzyme catalyses tRNA(Cys) + L-cysteine + ATP = L-cysteinyl-tRNA(Cys) + AMP + diphosphate. The sequence is that of Cysteine--tRNA ligase from Aliivibrio fischeri (strain ATCC 700601 / ES114) (Vibrio fischeri).